We begin with the raw amino-acid sequence, 157 residues long: Probable succinate transporter subunit YjjB (157 aa).

Helical transmembrane passes span 8–28, 50–70, 87–107, and 129–149; these read LALA…AMVF, MILM…SMLV, VFTV…TAMI, and FLTA…PGLW.

Belongs to the ThrE exporter (TC 2.A.79) family. As to quaternary structure, the transporter is composed of YjjB and YjjP.

The protein resides in the cell inner membrane. In terms of biological role, involved in succinate export with YjjP. Both proteins are required for export. The polypeptide is Probable succinate transporter subunit YjjB (Shigella flexneri serotype 5b (strain 8401)).